We begin with the raw amino-acid sequence, 296 residues long: Nucleotide-binding protein SMU_1306c (296 aa).

Position 13–20 (13–20 (GMSGAGKT)) interacts with ATP. 63-66 (DMRS) contributes to the GTP binding site.

Belongs to the RapZ-like family.

Displays ATPase and GTPase activities. This is Nucleotide-binding protein SMU_1306c from Streptococcus mutans serotype c (strain ATCC 700610 / UA159).